The chain runs to 176 residues: RNA pyrophosphohydrolase (176 aa).

One can recognise a Nudix hydrolase domain in the interval 6 to 149 (GYRPNVGIVI…KRDVYRRVMK (144 aa)). Positions 38-59 (GGINPGESAEQAMYRELFEEVG) match the Nudix box motif.

Belongs to the Nudix hydrolase family. RppH subfamily. It depends on a divalent metal cation as a cofactor.

In terms of biological role, accelerates the degradation of transcripts by removing pyrophosphate from the 5'-end of triphosphorylated RNA, leading to a more labile monophosphorylated state that can stimulate subsequent ribonuclease cleavage. The chain is RNA pyrophosphohydrolase from Escherichia fergusonii (strain ATCC 35469 / DSM 13698 / CCUG 18766 / IAM 14443 / JCM 21226 / LMG 7866 / NBRC 102419 / NCTC 12128 / CDC 0568-73).